A 393-amino-acid chain; its full sequence is Stearoyl-[acyl-carrier-protein] 9-desaturase, chloroplastic (393 aa).

The N-terminal 30 residues, M1–M30, are a transit peptide targeting the chloroplast. Fe cation contacts are provided by E135, E173, H176, E226, E259, and H262.

Belongs to the fatty acid desaturase type 2 family. As to quaternary structure, homodimer. Fe(2+) serves as cofactor.

It is found in the plastid. The protein resides in the chloroplast. The enzyme catalyses octadecanoyl-[ACP] + 2 reduced [2Fe-2S]-[ferredoxin] + O2 + 2 H(+) = (9Z)-octadecenoyl-[ACP] + 2 oxidized [2Fe-2S]-[ferredoxin] + 2 H2O. It participates in lipid metabolism; fatty acid metabolism. In terms of biological role, converts stearoyl-ACP to oleoyl-ACP by introduction of a cis double bond between carbons 9 and 10 of the acyl chain. The chain is Stearoyl-[acyl-carrier-protein] 9-desaturase, chloroplastic from Solanum commersonii (Commerson's wild potato).